Reading from the N-terminus, the 557-residue chain is Aerobic glycerol-3-phosphate dehydrogenase (557 aa).

FAD is bound at residue 21-49; sequence DVVIIGGGITGAGIALDASQRGMKVALVE.

It belongs to the FAD-dependent glycerol-3-phosphate dehydrogenase family. Requires FAD as cofactor.

It localises to the cytoplasm. The enzyme catalyses a quinone + sn-glycerol 3-phosphate = dihydroxyacetone phosphate + a quinol. It participates in polyol metabolism; glycerol degradation via glycerol kinase pathway; glycerone phosphate from sn-glycerol 3-phosphate (aerobic route): step 1/1. This Staphylococcus haemolyticus (strain JCSC1435) protein is Aerobic glycerol-3-phosphate dehydrogenase (glpD).